We begin with the raw amino-acid sequence, 428 residues long: 3-phosphoshikimate 1-carboxyvinyltransferase (428 aa).

3 residues coordinate 3-phosphoshikimate: lysine 22, serine 23, and arginine 27. Residue lysine 22 participates in phosphoenolpyruvate binding. Glycine 96 and arginine 124 together coordinate phosphoenolpyruvate. Residues serine 169, serine 170, glutamine 171, serine 197, aspartate 313, asparagine 336, and lysine 340 each coordinate 3-phosphoshikimate. Residue glutamine 171 participates in phosphoenolpyruvate binding. The Proton acceptor role is filled by aspartate 313. Positions 344, 386, and 411 each coordinate phosphoenolpyruvate.

This sequence belongs to the EPSP synthase family. Monomer.

Its subcellular location is the cytoplasm. It carries out the reaction 3-phosphoshikimate + phosphoenolpyruvate = 5-O-(1-carboxyvinyl)-3-phosphoshikimate + phosphate. It functions in the pathway metabolic intermediate biosynthesis; chorismate biosynthesis; chorismate from D-erythrose 4-phosphate and phosphoenolpyruvate: step 6/7. Catalyzes the transfer of the enolpyruvyl moiety of phosphoenolpyruvate (PEP) to the 5-hydroxyl of shikimate-3-phosphate (S3P) to produce enolpyruvyl shikimate-3-phosphate and inorganic phosphate. The polypeptide is 3-phosphoshikimate 1-carboxyvinyltransferase (Photorhabdus laumondii subsp. laumondii (strain DSM 15139 / CIP 105565 / TT01) (Photorhabdus luminescens subsp. laumondii)).